The chain runs to 302 residues: AP-1 complex-associated regulatory protein (302 aa).

A Phosphoserine modification is found at serine 29. The interaction with AP1G1 stretch occupies residues 78-138; that stretch reads DSIAEKQKDL…ERQRIVQQYH (61 aa). A coiled-coil region spans residues 80–138; the sequence is IAEKQKDLDKKIQKELALQEEKLRLEEEALYAAQREAARAAKQRKLLEQERQRIVQQYH. Over residues 188–206 the composition is skewed to polar residues; the sequence is CDLMTKTKSTSGNDDSTSL. The interval 188–258 is disordered; it reads CDLMTKTKST…TSASDDSNGL (71 aa). The segment at 199–215 is sufficient for association with the Arp2/3 complex; it reads GNDDSTSLDLEWEDEEG. The segment covering 221–233 has biased composition (basic and acidic residues); the sequence is PMRERSKTEEDIL. Phosphoserine is present on serine 226. Threonine 228 is subject to Phosphothreonine. The span at 242-255 shows a compositional bias: polar residues; that stretch reads KKTGSNPTSASDDS.

In terms of assembly, interacts (via coiled-coil domain) with AP1G1 (via GAE domain). Interacts with KIF5B. Associates with the Arp2/3 complex. Post-translationally, palmitoylated.

It is found in the golgi apparatus. It localises to the trans-Golgi network. Its subcellular location is the late endosome. The protein resides in the early endosome. Necessary for adaptor protein complex 1 (AP-1)-dependent transport between the trans-Golgi network and endosomes. Regulates the membrane association of AP1G1/gamma1-adaptin, one of the subunits of the AP-1 adaptor complex. The direct interaction with AP1G1/gamma1-adaptin attenuates the release of the AP-1 complex from membranes. Regulates endosomal membrane traffic via association with AP-1 and KIF5B thus linking kinesin-based plus-end-directed microtubular transport to AP-1-dependent membrane traffic. May act as effector of AP-1 in calcium-induced endo-lysosome secretion. Inhibits Arp2/3 complex function; negatively regulates cell spreading, size and motility via intracellular sequestration of the Arp2/3 complex. This is AP-1 complex-associated regulatory protein (AP1AR) from Homo sapiens (Human).